The primary structure comprises 291 residues: Pantothenate synthetase (291 aa).

33 to 40 (MGALHEGH) provides a ligand contact to ATP. His-40 acts as the Proton donor in catalysis. Gln-64 contacts (R)-pantoate. Beta-alanine is bound at residue Gln-64. ATP is bound at residue 157 to 160 (GEKD). Residue Gln-163 participates in (R)-pantoate binding. Residues Val-186 and 194–197 (LSSR) contribute to the ATP site.

Belongs to the pantothenate synthetase family. As to quaternary structure, homodimer.

The protein resides in the cytoplasm. The catalysed reaction is (R)-pantoate + beta-alanine + ATP = (R)-pantothenate + AMP + diphosphate + H(+). The protein operates within cofactor biosynthesis; (R)-pantothenate biosynthesis; (R)-pantothenate from (R)-pantoate and beta-alanine: step 1/1. In terms of biological role, catalyzes the condensation of pantoate with beta-alanine in an ATP-dependent reaction via a pantoyl-adenylate intermediate. The chain is Pantothenate synthetase from Rubrobacter xylanophilus (strain DSM 9941 / JCM 11954 / NBRC 16129 / PRD-1).